A 393-amino-acid chain; its full sequence is Ethanol acetyltransferase 1 (393 aa).

The transit peptide at 1–25 (MHFTRTLFNQVASKASRQLPVQKRV) directs the protein to the mitochondrion. Residues 49-151 (PIVFVHGIFG…GVIIDNSPIE (103 aa)) enclose the AB hydrolase-1 domain. Active-site charge relay system residues include S122, D146, and H296. The span at 343–354 (AKHAQQIEELRK) shows a compositional bias: basic and acidic residues. A disordered region spans residues 343–393 (AKHAQQIEELRKVTSTSESSIPHSTQSSEQAFTENIDLARQEREHQKSVSA). The segment covering 355-375 (VTSTSESSIPHSTQSSEQAFT) has biased composition (polar residues). Residues 379 to 393 (DLARQEREHQKSVSA) show a composition bias toward basic and acidic residues.

This sequence belongs to the AB hydrolase superfamily.

It is found in the mitochondrion. The catalysed reaction is ethanol + acetyl-CoA = ethyl acetate + CoA. The enzyme catalyses acetyl-CoA + H2O = acetate + CoA + H(+). It carries out the reaction ethyl acetate + H2O = ethanol + acetate + H(+). Functionally, alcohol acetyltransferase that catalyzes the synthesis of ethyl acetate from ethanol and acetyl-CoA. Can also function as a thioesterase by hydrolyzing acetyl-CoA in the absence of ethanol, as well as esterase hydrolyzing ethyl acetate. The protein is Ethanol acetyltransferase 1 (EAT1) of Wickerhamomyces ciferrii (strain ATCC 14091 / BCRC 22168 / CBS 111 / JCM 3599 / NBRC 0793 / NRRL Y-1031 F-60-10) (Yeast).